We begin with the raw amino-acid sequence, 101 residues long: Iron-sulfur cluster assembly protein CyaY (101 aa).

It belongs to the frataxin family.

In terms of biological role, involved in iron-sulfur (Fe-S) cluster assembly. May act as a regulator of Fe-S biogenesis. This is Iron-sulfur cluster assembly protein CyaY from Haemophilus influenzae (strain 86-028NP).